The chain runs to 339 residues: Protein pelota homolog (339 aa).

Belongs to the eukaryotic release factor 1 family. Pelota subfamily. As to quaternary structure, monomer. It depends on a divalent metal cation as a cofactor.

The protein localises to the cytoplasm. May function in recognizing stalled ribosomes, interact with stem-loop structures in stalled mRNA molecules, and effect endonucleolytic cleavage of the mRNA. May play a role in the release non-functional ribosomes and degradation of damaged mRNAs. Has endoribonuclease activity. The protein is Protein pelota homolog of Picrophilus torridus (strain ATCC 700027 / DSM 9790 / JCM 10055 / NBRC 100828 / KAW 2/3).